Here is a 678-residue protein sequence, read N- to C-terminus: 1,4-alpha-glucan-branching enzyme (678 aa).

(1,4-alpha-D-glucosyl)n-binding residues include Trp-88 and Lys-124. The active-site Nucleophile is the Asp-338. Residue Glu-391 is the Proton donor of the active site.

It belongs to the glycosyl hydrolase 13 family. GlgB subfamily. As to quaternary structure, monomer.

The catalysed reaction is Transfers a segment of a (1-&gt;4)-alpha-D-glucan chain to a primary hydroxy group in a similar glucan chain.. Its pathway is glycan biosynthesis; glycogen biosynthesis. In terms of biological role, glycogen-branching enzyme participates in the glycogen biosynthetic process along with glycogenin and glycogen synthase. Generates alpha-1,6-glucosidic branches from alpha-1,4-linked glucose chains, to increase solubility of the glycogen polymer. This is 1,4-alpha-glucan-branching enzyme (glgB) from Dictyostelium discoideum (Social amoeba).